A 470-amino-acid polypeptide reads, in one-letter code: Alpha-1A adrenergic receptor (470 aa).

Topologically, residues 1–27 (MTPSSVTLNCSNCSHVLAPELNTVKAV) are extracellular. N-linked (GlcNAc...) asparagine glycosylation is found at Asn9 and Asn12. Residues 28–51 (VLGMVLGIFILFGVIGNILVILSV) form a helical membrane-spanning segment. The Cytoplasmic portion of the chain corresponds to 52–64 (VCHRHLQTVTYYF). A helical membrane pass occupies residues 65 to 88 (IVNLAVADLLLSSTVLPFSAIFEI). The Extracellular segment spans residues 89–99 (LDRWVFGRVFC). Residues Cys99 and Cys176 are joined by a disulfide bond. The helical transmembrane segment at 100–122 (NIWAAVDVLCCTASIMSLCVISV) threads the bilayer. The Cytoplasmic segment spans residues 123–143 (DRYIGVSYPLRYPAIMTKRRA). The chain crosses the membrane as a helical span at residues 144-167 (LLAVMLLWVLSVIISIGPLFGWKE). Residues 168–181 (PAPEDETVCKITEE) lie on the Extracellular side of the membrane. A helical membrane pass occupies residues 182-205 (PGYAIFSAVGSFYLPLAIILAMYC). Residues 206–271 (RVYVVAQKES…FSREKKAAKT (66 aa)) are Cytoplasmic-facing. Residues 272 to 295 (LGIVVGCFVLCWLPFFLVLPIGSI) traverse the membrane as a helical segment. Topologically, residues 296 to 303 (FPAYRPSD) are extracellular. The chain crosses the membrane as a helical span at residues 304-327 (TVFKITFWLGYFNSCINPIIYLCS). Topologically, residues 328–470 (NQEFKKAFQS…LSLSEKGESV (143 aa)) are cytoplasmic. The S-palmitoyl cysteine moiety is linked to residue Cys343. The tract at residues 375–416 (GAPCRLSPSSSVALSRTPSSRDSREWRVFSGGPINSGPGPTE) is disordered. Polar residues predominate over residues 381 to 392 (SPSSSVALSRTP).

This sequence belongs to the G-protein coupled receptor 1 family. Adrenergic receptor subfamily. ADRA1A sub-subfamily.

It is found in the cell membrane. In terms of biological role, this alpha-adrenergic receptor mediates its action by association with G proteins that activate a phosphatidylinositol-calcium second messenger system. The chain is Alpha-1A adrenergic receptor (adra1a) from Oryzias latipes (Japanese rice fish).